Here is a 151-residue protein sequence, read N- to C-terminus: SsrA-binding protein (151 aa).

The interval 132–151 is disordered; the sequence is KRQTIKKRDQDREIHRKYGI.

Belongs to the SmpB family.

It is found in the cytoplasm. Required for rescue of stalled ribosomes mediated by trans-translation. Binds to transfer-messenger RNA (tmRNA), required for stable association of tmRNA with ribosomes. tmRNA and SmpB together mimic tRNA shape, replacing the anticodon stem-loop with SmpB. tmRNA is encoded by the ssrA gene; the 2 termini fold to resemble tRNA(Ala) and it encodes a 'tag peptide', a short internal open reading frame. During trans-translation Ala-aminoacylated tmRNA acts like a tRNA, entering the A-site of stalled ribosomes, displacing the stalled mRNA. The ribosome then switches to translate the ORF on the tmRNA; the nascent peptide is terminated with the 'tag peptide' encoded by the tmRNA and targeted for degradation. The ribosome is freed to recommence translation, which seems to be the essential function of trans-translation. This chain is SsrA-binding protein, found in Lactobacillus johnsonii (strain CNCM I-12250 / La1 / NCC 533).